Here is a 187-residue protein sequence, read N- to C-terminus: Probable chorismate pyruvate-lyase (187 aa).

Substrate is bound by residues Arg-80, Leu-118, and Glu-170.

It belongs to the UbiC family.

It is found in the cytoplasm. It carries out the reaction chorismate = 4-hydroxybenzoate + pyruvate. The protein operates within cofactor biosynthesis; ubiquinone biosynthesis. Its function is as follows. Removes the pyruvyl group from chorismate, with concomitant aromatization of the ring, to provide 4-hydroxybenzoate (4HB) for the ubiquinone pathway. This chain is Probable chorismate pyruvate-lyase, found in Pseudomonas fluorescens (strain ATCC BAA-477 / NRRL B-23932 / Pf-5).